We begin with the raw amino-acid sequence, 680 residues long: Extracellular matrix protein 2 (680 aa).

The N-terminal stretch at 1 to 20 is a signal peptide; that stretch reads MKFSSLYCFLLLLIFQTDFG. The VWFC domain maps to 100-157; it reads GHCLANGMIMYNKAVWSPEPCTTCLCLNGKVLCDETKCHPQMCPQTIIPEGECCPVCS. Residues 189 to 198 are compositionally biased toward acidic residues; it reads QLEEDEEEVK. The disordered stretch occupies residues 189–293; it reads QLEEDEEEVK…RLPIPATPRG (105 aa). Over residues 223–238 the composition is skewed to basic and acidic residues; sequence QSREGKAQRPEEEGRQ. Residues 249–272 are compositionally biased toward acidic residues; the sequence is NEEDDDEEEEDDDDEEEDDDDEDE. The Cell attachment site motif lies at 275-277; it reads RGD. The LRRNT domain maps to 288–325; that stretch reads PATPRGIPSLPSMCSLSYKTISCISADLTQIPPLTAPE. 13 LRR repeats span residues 349 to 369, 375 to 396, 397 to 417, 420 to 440, 446 to 466, 467 to 488, 491 to 511, 517 to 538, 539 to 559, 563 to 583, 590 to 611, 613 to 634, and 642 to 665; these read NLER…GPKA, NLMR…LPST, LEEL…SLSD, QLVT…NSLA, SLSY…GLPA, SIEE…SFNH, KINV…APLA, NLES…LPKS, LVHL…VFGH, GLEY…DRVS, SLRE…VQEM, ALHF…QICN, and NLQH…AFSC. N-linked (GlcNAc...) asparagine glycosylation occurs at asparagine 359. The N-linked (GlcNAc...) asparagine glycan is linked to asparagine 430. N-linked (GlcNAc...) asparagine glycosylation occurs at asparagine 487.

The protein belongs to the small leucine-rich proteoglycan (SLRP) family. SLRP class I subfamily. In terms of assembly, interacts with numerous extracellular matrix proteins. Interacts with MSL1 and RASSF1.

It is found in the secreted. The protein localises to the extracellular space. The protein resides in the extracellular matrix. Its function is as follows. Promotes matrix assembly and cell adhesiveness. This Bos taurus (Bovine) protein is Extracellular matrix protein 2 (ECM2).